The sequence spans 331 residues: Probable transcriptional regulatory protein At2g25830 (331 aa).

It belongs to the TACO1 family.

The polypeptide is Probable transcriptional regulatory protein At2g25830 (Arabidopsis thaliana (Mouse-ear cress)).